The following is a 756-amino-acid chain: Amine oxidase [copper-containing] 2 (756 aa).

The Cytoplasmic segment spans residues M1–K4. The chain crosses the membrane as a helical span at residues I5–L25. Over T26–F756 the chain is Extracellular. N-linked (GlcNAc...) asparagine glycosylation is found at N133, N198, and N226. Residue D380 is the Proton acceptor of the active site. A disulfide bridge links C398 with C424. Catalysis depends on Y465, which acts as the Schiff-base intermediate with substrate; via topaquinone. Y465 carries the post-translational modification 2',4',5'-topaquinone. 2 residues coordinate Cu(2+): H516 and H518. Ca(2+) is bound by residues D525, L526, D527, E568, E637, F659, and N661. N662 is a glycosylation site (N-linked (GlcNAc...) asparagine). Positions 663, 669, and 670 each coordinate Ca(2+). H680 contacts Cu(2+). C730 and C737 are oxidised to a cystine.

Belongs to the copper/topaquinone oxidase family. Homodimer; disulfide-linked. Probably forms heterodimers with AOC3. Cu(2+) is required as a cofactor. The cofactor is Ca(2+). Requires L-topaquinone as cofactor. Topaquinone (TPQ) is generated by copper-dependent autoxidation of a specific tyrosyl residue. In terms of tissue distribution, expressed in many tissues including adipocytes with higher expression in retina where it is active. Not expressed in testis. As to expression, not expressed in thymus.

It is found in the cell membrane. Its subcellular location is the cytoplasm. It catalyses the reaction 2-phenylethylamine + O2 + H2O = 2-phenylacetaldehyde + H2O2 + NH4(+). The enzyme catalyses tryptamine + O2 + H2O = indole-3-acetaldehyde + H2O2 + NH4(+). It carries out the reaction tyramine + O2 + H2O = (4-hydroxyphenyl)acetaldehyde + H2O2 + NH4(+). Its function is as follows. Catalyzes the oxidative deamination of primary amines to the corresponding aldehydes with the concomitant production of hydrogen peroxide and ammonia. Has a preference for 2-phenylethylamine, tryptamine and tyramine. Could also act on methylamine and benzylamine but much less efficiently. The polypeptide is Amine oxidase [copper-containing] 2 (Homo sapiens (Human)).